A 639-amino-acid polypeptide reads, in one-letter code: Serine/threonine-protein kinase PAK mbt (639 aa).

A CRIB domain is found at 11-24 (ISMPSNFEHRVHTG). The segment at 25–367 (FDKRENKYVG…VVSAGDPREN (343 aa)) is linker. 2 disordered regions span residues 79–195 (HHNN…SLLY) and 222–345 (RSNL…QDQR). Composition is skewed to low complexity over residues 91 to 129 (NSSSTMMMGSMAPMNPMAPGAHPMMSHGPGMMMPPETGG), 138 to 159 (VARSNSLRSSSPPRVRRVANVP), 227 to 241 (PPSGGSMPQQQQTSP), and 274 to 295 (QQQQQQQQQAKQGGDQNQNPLH). A compositionally biased stretch (basic residues) spans 296 to 308 (PHAHPHPHHHQHL). A compositionally biased stretch (low complexity) spans 309–331 (AKSASRASSSSGGASSAAQQASG). Positions 368–619 (LDHFNKIGEG…AAELLAHPFL (252 aa)) constitute a Protein kinase domain. Residues 374 to 382 (IGEGSTGTV) and lysine 397 contribute to the ATP site. The active-site Proton acceptor is aspartate 487. Serine 521 bears the Phosphoserine mark. At threonine 525 the chain carries Phosphothreonine.

This sequence belongs to the protein kinase superfamily. STE Ser/Thr protein kinase family. STE20 subfamily. Interacts tightly with GTP-bound but not GDP-bound Cdc42 and weakly with Rac1. Mg(2+) is required as a cofactor. In terms of processing, autophosphorylated when activated by Cdc42. Expressed in adult brain and eye. High levels detected in developing photoreceptor cells and future bristle cells, and lower levels in cone and pigment cells, as detected in third instar eye imaginal disks (at protein level).

It is found in the cell junction. The protein localises to the adherens junction. The protein resides in the cell membrane. The catalysed reaction is L-seryl-[protein] + ATP = O-phospho-L-seryl-[protein] + ADP + H(+). The enzyme catalyses L-threonyl-[protein] + ATP = O-phospho-L-threonyl-[protein] + ADP + H(+). Its function is as follows. Involved in neurogenesis of the adult central nervous system, and together with Cdc42, regulates photoreceptor cell morphogenesis. Phosphorylates exogenous substrates when activated by Cdc42. The protein is Serine/threonine-protein kinase PAK mbt of Drosophila melanogaster (Fruit fly).